The sequence spans 620 residues: Chaperone protein HscA homolog (620 aa).

Belongs to the heat shock protein 70 family.

Functionally, chaperone involved in the maturation of iron-sulfur cluster-containing proteins. Has a low intrinsic ATPase activity which is markedly stimulated by HscB. The protein is Chaperone protein HscA homolog of Neisseria meningitidis serogroup B (strain ATCC BAA-335 / MC58).